We begin with the raw amino-acid sequence, 467 residues long: UDP-N-acetylmuramate--L-alanine ligase (467 aa).

114–120 serves as a coordination point for ATP; sequence GTHGKTT.

This sequence belongs to the MurCDEF family.

Its subcellular location is the cytoplasm. The enzyme catalyses UDP-N-acetyl-alpha-D-muramate + L-alanine + ATP = UDP-N-acetyl-alpha-D-muramoyl-L-alanine + ADP + phosphate + H(+). Its pathway is cell wall biogenesis; peptidoglycan biosynthesis. Its function is as follows. Cell wall formation. In Azorhizobium caulinodans (strain ATCC 43989 / DSM 5975 / JCM 20966 / LMG 6465 / NBRC 14845 / NCIMB 13405 / ORS 571), this protein is UDP-N-acetylmuramate--L-alanine ligase.